A 143-amino-acid chain; its full sequence is Glutaredoxin-2 (143 aa).

The N-terminal 30 residues, 1–30 (METNFSFDSNLIVIIIITLFATRIIAKRFL), are a transit peptide targeting the mitochondrion. Phosphoserine is present on S37. The 103-residue stretch at 41–143 (VAHVKDLIGQ…LAEILKPVFQ (103 aa)) folds into the Glutaredoxin domain. Residue 58 to 63 (KTYCPY) coordinates glutathione. C61 carries the post-translational modification S-glutathionyl cysteine; alternate. A disulfide bridge links C61 with C64. Position 91 is a phosphoserine (S91). Residues V109 and 122–123 (NS) contribute to the glutathione site.

This sequence belongs to the glutaredoxin family.

The protein resides in the cytoplasm. Its subcellular location is the mitochondrion. It carries out the reaction 2 glutathione + H2O2 = glutathione disulfide + 2 H2O. It catalyses the reaction 1-chloro-2,4-dinitrobenzene + glutathione = 2,4-dinitrophenyl-S-glutathione + chloride + H(+). The catalysed reaction is RX + glutathione = an S-substituted glutathione + a halide anion + H(+). Functionally, component of the glutathione system which performs several activities such as glutathione-dependent oxidoreductase, glutathione peroxidase and glutathione S-transferase (GST) activity. The disulfide bond functions as an electron carrier in the glutathione-dependent synthesis of deoxyribonucleotides by the enzyme ribonucleotide reductase. In addition, it is also involved in reducing cytosolic protein- and non-protein-disulfides in a coupled system with glutathione reductase. Required for resistance to reactive oxygen species (ROS) by directly reducing hydroperoxides and for the detoxification of ROS-mediated damage. GRX2 is more active as an oxidoreductase than GRX1. Responsible for the S-glutathionylation of DHBP synthase. In Saccharomyces cerevisiae (strain ATCC 204508 / S288c) (Baker's yeast), this protein is Glutaredoxin-2 (GRX2).